The chain runs to 105 residues: Replication initiation control protein YabA (105 aa).

Residues histidine 79, cysteine 81, cysteine 95, and cysteine 98 each coordinate Zn(2+).

The protein belongs to the YabA family. As to quaternary structure, homotetramer. Interacts with both DnaA and DnaN, acting as a bridge between these two proteins. Zn(2+) serves as cofactor.

It is found in the cytoplasm. The protein localises to the nucleoid. In terms of biological role, involved in control of chromosome replication initiation. Inhibits the cooperative binding of DnaA to the oriC region, thus negatively regulating initiation of chromosome replication. Inhibits the ability of DnaA-ATP to form a helix on DNA; does not disassemble preformed DnaA-DNA helices. Decreases the residence time of DnaA on the chromosome at its binding sites (oriC, replication forks and promoter-binding sites). Tethers DnaA to the replication machinery via the DNA polymerase beta sliding clamp subunit (dnaN). Associates with oriC and other DnaA targets on the chromosome in a DnaA-dependent manner. In Streptococcus sanguinis (strain SK36), this protein is Replication initiation control protein YabA.